We begin with the raw amino-acid sequence, 467 residues long: Glutamate--tRNA ligase (467 aa).

Positions 15–25 match the 'HIGH' region motif; that stretch reads PSPTGYLHVGG. The short motif at 249-253 is the 'KMSKS' region element; it reads KLSKR. K252 provides a ligand contact to ATP.

This sequence belongs to the class-I aminoacyl-tRNA synthetase family. Glutamate--tRNA ligase type 1 subfamily. Monomer.

The protein localises to the cytoplasm. It catalyses the reaction tRNA(Glu) + L-glutamate + ATP = L-glutamyl-tRNA(Glu) + AMP + diphosphate. Functionally, catalyzes the attachment of glutamate to tRNA(Glu) in a two-step reaction: glutamate is first activated by ATP to form Glu-AMP and then transferred to the acceptor end of tRNA(Glu). In Coprothermobacter proteolyticus (strain ATCC 35245 / DSM 5265 / OCM 4 / BT), this protein is Glutamate--tRNA ligase.